Consider the following 195-residue polypeptide: ALK and LTK ligand 2b (195 aa).

Intrachain disulfides connect Cys156–Cys192 and Cys170–Cys179.

The protein belongs to the ALKAL family. In terms of assembly, homodimer. In terms of tissue distribution, highly expressed in the swim bladder and single cells of unknown identity in the head.

The protein localises to the secreted. The protein resides in the cell membrane. Cytokine that acts as a physiological ligand for receptor tyrosine kinases LTK and ALK. Required for neural crest cell differentiation and iridophore development during embryonic iridophore development and adult stripe development by acting as a receptor for LTK. Also required for iridophore formation in the adult eye. The polypeptide is ALK and LTK ligand 2b (Danio rerio (Zebrafish)).